The primary structure comprises 240 residues: Ubiquinone biosynthesis O-methyltransferase (240 aa).

The S-adenosyl-L-methionine site is built by arginine 36, glycine 66, aspartate 87, and methionine 129.

This sequence belongs to the methyltransferase superfamily. UbiG/COQ3 family.

The catalysed reaction is a 3-demethylubiquinol + S-adenosyl-L-methionine = a ubiquinol + S-adenosyl-L-homocysteine + H(+). It catalyses the reaction a 3-(all-trans-polyprenyl)benzene-1,2-diol + S-adenosyl-L-methionine = a 2-methoxy-6-(all-trans-polyprenyl)phenol + S-adenosyl-L-homocysteine + H(+). It participates in cofactor biosynthesis; ubiquinone biosynthesis. Functionally, O-methyltransferase that catalyzes the 2 O-methylation steps in the ubiquinone biosynthetic pathway. The sequence is that of Ubiquinone biosynthesis O-methyltransferase from Pelagibacter ubique (strain HTCC1062).